A 139-amino-acid polypeptide reads, in one-letter code: SPbeta prophage-derived uncharacterized protein YomN (139 aa).

The sequence is that of SPbeta prophage-derived uncharacterized protein YomN (yomN) from Bacillus subtilis (strain 168).